A 476-amino-acid chain; its full sequence is Argininosuccinate lyase (476 aa).

This sequence belongs to the lyase 1 family. Argininosuccinate lyase subfamily.

It is found in the cytoplasm. The catalysed reaction is 2-(N(omega)-L-arginino)succinate = fumarate + L-arginine. It functions in the pathway amino-acid biosynthesis; L-arginine biosynthesis; L-arginine from L-ornithine and carbamoyl phosphate: step 3/3. The protein is Argininosuccinate lyase of Nitrosospira multiformis (strain ATCC 25196 / NCIMB 11849 / C 71).